The sequence spans 293 residues: Formamidopyrimidine-DNA glycosylase (293 aa).

Proline 2 acts as the Schiff-base intermediate with DNA in catalysis. The Proton donor role is filled by glutamate 3. The Proton donor; for beta-elimination activity role is filled by lysine 58. The DNA site is built by histidine 104, arginine 123, and arginine 166. The FPG-type zinc-finger motif lies at 257–293; it reads AVYDREGEPCRSKGCDGVVKRFVQNGRSTFWCPKCQK. The active-site Proton donor; for delta-elimination activity is arginine 283.

The protein belongs to the FPG family. As to quaternary structure, monomer. It depends on Zn(2+) as a cofactor.

It catalyses the reaction Hydrolysis of DNA containing ring-opened 7-methylguanine residues, releasing 2,6-diamino-4-hydroxy-5-(N-methyl)formamidopyrimidine.. The enzyme catalyses 2'-deoxyribonucleotide-(2'-deoxyribose 5'-phosphate)-2'-deoxyribonucleotide-DNA = a 3'-end 2'-deoxyribonucleotide-(2,3-dehydro-2,3-deoxyribose 5'-phosphate)-DNA + a 5'-end 5'-phospho-2'-deoxyribonucleoside-DNA + H(+). In terms of biological role, involved in base excision repair of DNA damaged by oxidation or by mutagenic agents. Acts as a DNA glycosylase that recognizes and removes damaged bases. Has a preference for oxidized purines, such as 7,8-dihydro-8-oxoguanine (8-oxoG). Has AP (apurinic/apyrimidinic) lyase activity and introduces nicks in the DNA strand. Cleaves the DNA backbone by beta-delta elimination to generate a single-strand break at the site of the removed base with both 3'- and 5'-phosphates. This is Formamidopyrimidine-DNA glycosylase from Rhodopseudomonas palustris (strain BisB18).